Consider the following 228-residue polypeptide: Translation initiation factor 6 (228 aa).

Functionally, binds to the 50S ribosomal subunit and prevents its association with the 30S ribosomal subunit to form the 70S initiation complex. The chain is Translation initiation factor 6 from Methanocaldococcus jannaschii (strain ATCC 43067 / DSM 2661 / JAL-1 / JCM 10045 / NBRC 100440) (Methanococcus jannaschii).